Consider the following 111-residue polypeptide: Translation initiation factor 1A 1 (111 aa).

Positions Met1–Arg28 are disordered. In terms of domain architecture, S1-like spans Thr22–Thr96.

The protein belongs to the eIF-1A family.

Functionally, seems to be required for maximal rate of protein biosynthesis. Enhances ribosome dissociation into subunits and stabilizes the binding of the initiator Met-tRNA(I) to 40 S ribosomal subunits. This is Translation initiation factor 1A 1 (eIF1A1) from Methanosarcina mazei (strain ATCC BAA-159 / DSM 3647 / Goe1 / Go1 / JCM 11833 / OCM 88) (Methanosarcina frisia).